The chain runs to 283 residues: N-terminal Xaa-Pro-Lys N-methyltransferase 2 (283 aa).

S-adenosyl-L-methionine contacts are provided by residues G124, R129, D146, 174-175, and Q190; that span reads LQ.

The protein belongs to the methyltransferase superfamily. NTM1 family.

It is found in the nucleus. The enzyme catalyses N-terminal L-alanyl-L-prolyl-L-lysyl-[protein] + S-adenosyl-L-methionine = N-terminal N-methyl-L-alanyl-L-prolyl-L-lysyl-[protein] + S-adenosyl-L-homocysteine + H(+). It carries out the reaction N-terminal L-prolyl-L-prolyl-L-lysyl-[protein] + S-adenosyl-L-methionine = N-terminal N-methyl-L-prolyl-L-prolyl-L-lysyl-[protein] + S-adenosyl-L-homocysteine + H(+). It catalyses the reaction N-terminal L-seryl-L-prolyl-L-lysyl-[protein] + S-adenosyl-L-methionine = N-terminal N-methyl-L-seryl-L-prolyl-L-lysyl-[protein] + S-adenosyl-L-homocysteine + H(+). In terms of biological role, alpha N-methyltransferase that methylates the N-terminus of target proteins containing the N-terminal motif [Ala/Pro/Ser]-Pro-Lys when the initiator Met is cleaved. Specifically catalyzes monomethylation of exposed alpha-amino group of Ala or Ser residue in the [Ala/Ser]-Pro-Lys motif and Pro in the Pro-Pro-Lys motif. Predominantly functions as a mono-methyltransferase but is also able to di-/tri-methylate the GPKRIA peptide and di-methylate the PPKRIA peptide (in vitro). May activate NTMT1 by priming its substrates for trimethylation. This is N-terminal Xaa-Pro-Lys N-methyltransferase 2 (Ntmt2) from Mus musculus (Mouse).